A 399-amino-acid polypeptide reads, in one-letter code: MTFKTLDDLTDIAGKRVLVRVDLNVPVKDGQVTDTTRIERVAPTIRELSEKGAKIILLAHFGRPKGEPVADMSLKAIAPAVEEILDQRVHFAADCIGDKAANAIAEMNDGDVLLLENTRFHKGEEKNDPAFVTALAANGDLYVNDAFSAAHRAHASTEGLAQHLPAYAGRTMQAELEALEKGLGNPKRPVVAIVGGAKVSTKIDLLQNLVKKVDALVIGGGMANTFLAAQGVDVGKSLCEHDLAETAKSIIAAAAAAGCAIVLPEDGVVAREFKAGADNAVVDIKAIPADAMVLDVGPKSVAAINDWISRAETLVWNGPLGAFEIAPFDKATVAAAKHAAARTRQGSLVSVAGGGDTVAALNHAEVADDFTYVSTAGGAFLEWMEGKPLPGVDILHKQK.

Residues aspartate 22–asparagine 24, arginine 37, histidine 60–arginine 63, arginine 119, and arginine 152 each bind substrate. ATP contacts are provided by residues lysine 202, glutamate 324, and glycine 354 to threonine 357.

It belongs to the phosphoglycerate kinase family. Monomer.

It localises to the cytoplasm. The enzyme catalyses (2R)-3-phosphoglycerate + ATP = (2R)-3-phospho-glyceroyl phosphate + ADP. The protein operates within carbohydrate degradation; glycolysis; pyruvate from D-glyceraldehyde 3-phosphate: step 2/5. The polypeptide is Phosphoglycerate kinase (Sinorhizobium fredii (strain NBRC 101917 / NGR234)).